We begin with the raw amino-acid sequence, 338 residues long: MIAWVERVWYGGSRWKFLLWPLSWLYLLVVAIRKTLFAVIKSSASEAGSASIRPPIIVVGNLTVGGAGKTPLVVALVEHFQRRGLRPGVVSRGYGGVSESYPVLVERNPDPGVTGDEPALIYMRTGCPVVVAPKRAQALQTLLDMYDCDVVISDDGLQHLALPRDMEVVVVDAQRGWGNGLCLPAGPLREPVRRLQSVDLVVSNGLHAQVNADYTMQLRPGRWKKVSGDEERGVNYFAGYTAHAVAAIGNPGRFFATLADLDVASIQHAFPDHYSYAQKDIEFNDDLPVLMTEKDAVKCKSFNLENAWYLEVGAELNSAFYERVDARLNELRSHKKDG.

63 to 70 (TVGGAGKT) is a binding site for ATP.

It belongs to the LpxK family.

It catalyses the reaction a lipid A disaccharide + ATP = a lipid IVA + ADP + H(+). The protein operates within glycolipid biosynthesis; lipid IV(A) biosynthesis; lipid IV(A) from (3R)-3-hydroxytetradecanoyl-[acyl-carrier-protein] and UDP-N-acetyl-alpha-D-glucosamine: step 6/6. In terms of biological role, transfers the gamma-phosphate of ATP to the 4'-position of a tetraacyldisaccharide 1-phosphate intermediate (termed DS-1-P) to form tetraacyldisaccharide 1,4'-bis-phosphate (lipid IVA). In Hahella chejuensis (strain KCTC 2396), this protein is Tetraacyldisaccharide 4'-kinase.